A 450-amino-acid polypeptide reads, in one-letter code: ATP-dependent protease ATPase subunit HslU (450 aa).

ATP-binding positions include valine 29, 71–76 (GVGKTE), aspartate 261, glutamate 328, and arginine 400.

This sequence belongs to the ClpX chaperone family. HslU subfamily. In terms of assembly, a double ring-shaped homohexamer of HslV is capped on each side by a ring-shaped HslU homohexamer. The assembly of the HslU/HslV complex is dependent on binding of ATP.

The protein resides in the cytoplasm. ATPase subunit of a proteasome-like degradation complex; this subunit has chaperone activity. The binding of ATP and its subsequent hydrolysis by HslU are essential for unfolding of protein substrates subsequently hydrolyzed by HslV. HslU recognizes the N-terminal part of its protein substrates and unfolds these before they are guided to HslV for hydrolysis. This chain is ATP-dependent protease ATPase subunit HslU, found in Rickettsia akari (strain Hartford).